We begin with the raw amino-acid sequence, 341 residues long: Putative amino-acid ABC transporter-binding protein YhdW (341 aa).

An N-terminal signal peptide occupies residues 1 to 19 (MKKMMIATLAAASVLLAVA).

Belongs to the bacterial solute-binding protein 3 family.

It localises to the periplasm. Its function is as follows. Probably part of the binding-protein-dependent transport system YdhWXYZ for an amino acid. The chain is Putative amino-acid ABC transporter-binding protein YhdW (yhdW) from Escherichia coli O157:H7.